Reading from the N-terminus, the 664-residue chain is Alcohol oxidase (664 aa).

Residue 8 to 39 (DIIVVGGGSTGCCIAGRLANLDDQNLTVALIE) participates in FAD binding. The active-site Proton acceptor is histidine 568. A Microbody targeting signal motif is present at residues 662–664 (ARF).

The protein belongs to the GMC oxidoreductase family. Homooctamer. The cofactor is FAD.

The protein localises to the peroxisome matrix. The enzyme catalyses a primary alcohol + O2 = an aldehyde + H2O2. Its pathway is energy metabolism; methane degradation. Functionally, catalyzes the oxidation of methanol to formaldehyde and hydrogen peroxide, the first step in the methanol utilization pathway of methylotrophic yeasts. The chain is Alcohol oxidase (MOX) from Pichia angusta (Yeast).